Consider the following 83-residue polypeptide: Cytotoxin homolog 5V (83 aa).

A signal peptide spans 1 to 21 (MKTLLLTLVVVTIVCLDLGYT). Cystine bridges form between cysteine 24–cysteine 43, cysteine 36–cysteine 61, cysteine 65–cysteine 76, and cysteine 77–cysteine 82.

This sequence belongs to the three-finger toxin family. Short-chain subfamily. Orphan group XV sub-subfamily. In terms of tissue distribution, expressed by the venom gland.

It localises to the secreted. The protein localises to the target cell membrane. Has low cytotoxic activity. The chain is Cytotoxin homolog 5V from Naja atra (Chinese cobra).